Here is a 744-residue protein sequence, read N- to C-terminus: Biotin sulfoxide reductase (744 aa).

S121 is a Mo-bis(molybdopterin guanine dinucleotide) binding site.

Belongs to the prokaryotic molybdopterin-containing oxidoreductase family. Requires Mo-bis(molybdopterin guanine dinucleotide) as cofactor.

This enzyme may serve as a scavenger, allowing the cell to utilize biotin sulfoxide as a biotin source. It reduces a spontaneous oxidation product of biotin, D-biotin D-sulfoxide (BSO or BDS), back to biotin. This chain is Biotin sulfoxide reductase, found in Cereibacter sphaeroides (Rhodobacter sphaeroides).